We begin with the raw amino-acid sequence, 239 residues long: Tubulin beta-3 chain (239 aa).

GTP is bound at residue N22. Residues 207–239 (EESNMNDLVSEYQQYQDASAEPXXEQEEDYEEA) are disordered. The segment covering 230–239 (XEQEEDYEEA) has biased composition (acidic residues).

It belongs to the tubulin family. As to quaternary structure, dimer of alpha and beta chains. A typical microtubule is a hollow water-filled tube with an outer diameter of 25 nm and an inner diameter of 15 nM. Alpha-beta heterodimers associate head-to-tail to form protofilaments running lengthwise along the microtubule wall with the beta-tubulin subunit facing the microtubule plus end conferring a structural polarity. Microtubules usually have 13 protofilaments but different protofilament numbers can be found in some organisms and specialized cells. Mg(2+) serves as cofactor.

The protein localises to the cytoplasm. It is found in the cytoskeleton. Its function is as follows. Tubulin is the major constituent of microtubules, a cylinder consisting of laterally associated linear protofilaments composed of alpha- and beta-tubulin heterodimers. Microtubules grow by the addition of GTP-tubulin dimers to the microtubule end, where a stabilizing cap forms. Below the cap, tubulin dimers are in GDP-bound state, owing to GTPase activity of alpha-tubulin. In Anemia phyllitidis (Fern), this protein is Tubulin beta-3 chain (TUBB3).